A 746-amino-acid chain; its full sequence is Serine/threonine-protein kinase SMU1 (746 aa).

2 disordered regions span residues Met-1 to His-138 and Gln-155 to Asn-212. 2 stretches are compositionally biased toward low complexity: residues Ser-15–Thr-54 and Ser-85–Ala-105. 3 stretches are compositionally biased toward polar residues: residues Leu-106–Thr-121, Arg-128–His-138, and Arg-156–Thr-176. The segment covering Pro-194–Asp-203 has biased composition (basic and acidic residues). The 14-residue stretch at Ile-237–Gly-250 folds into the CRIB domain. The disordered stretch occupies residues Gly-301–Lys-451. Over residues Pro-370–Asp-380 the composition is skewed to polar residues. Residues Ser-414–Ser-430 show a composition bias toward low complexity. The Protein kinase domain occupies Tyr-472–Leu-723. ATP-binding positions include Ile-478 to Val-486 and Lys-501. Catalysis depends on Asp-591, which acts as the Proton acceptor.

This sequence belongs to the protein kinase superfamily. STE Ser/Thr protein kinase family. STE20 subfamily.

It localises to the cytoplasm. Its subcellular location is the nucleus. It catalyses the reaction L-seryl-[protein] + ATP = O-phospho-L-seryl-[protein] + ADP + H(+). The catalysed reaction is L-threonyl-[protein] + ATP = O-phospho-L-threonyl-[protein] + ADP + H(+). Its function is as follows. MAP4K component of the MAPK pathway required for the mating pheromone response and the regulation of cell polarity and cell cycle. Phosphorylates histone H2B to form H2BS10ph. This Mycosarcoma maydis (Corn smut fungus) protein is Serine/threonine-protein kinase SMU1 (SMU1).